Consider the following 475-residue polypeptide: Dihydrolipoyl dehydrogenase (475 aa).

FAD is bound by residues 36–45 (ERYSTLGGVC), Lys-54, and Gly-117. The cysteines at positions 45 and 50 are disulfide-linked. NAD(+) is bound by residues 182 to 186 (GGGII), Glu-205, Val-238, and 270 to 273 (AIGR). FAD-binding residues include Asp-313 and Ala-321. His-445 functions as the Proton acceptor in the catalytic mechanism.

Belongs to the class-I pyridine nucleotide-disulfide oxidoreductase family. The cofactor is FAD.

The protein localises to the cytoplasm. The catalysed reaction is N(6)-[(R)-dihydrolipoyl]-L-lysyl-[protein] + NAD(+) = N(6)-[(R)-lipoyl]-L-lysyl-[protein] + NADH + H(+). In terms of biological role, the branched-chain alpha-keto dehydrogenase complex catalyzes the overall conversion of alpha-keto acids to acyl-CoA and CO(2). It contains multiple copies of 3 enzymatic components: branched-chain alpha-keto acid decarboxylase (E1), lipoamide acyltransferase (E2) and lipoamide dehydrogenase (E3). This is Dihydrolipoyl dehydrogenase (lpd) from Vibrio parahaemolyticus serotype O3:K6 (strain RIMD 2210633).